The following is a 157-amino-acid chain: Arginine repressor (157 aa).

The protein belongs to the ArgR family.

The protein resides in the cytoplasm. Its pathway is amino-acid biosynthesis; L-arginine biosynthesis [regulation]. Regulates arginine biosynthesis genes. The chain is Arginine repressor from Bacteroides fragilis (strain ATCC 25285 / DSM 2151 / CCUG 4856 / JCM 11019 / LMG 10263 / NCTC 9343 / Onslow / VPI 2553 / EN-2).